The following is a 567-amino-acid chain: MEGSPIPVLTVPTAPYEDQRPTGGGGLRRPTGLFEGQRNYLPNFIQSVLSSIDLRDRQGCTMVVGSDGRYFSRTATEIVVQMAAANGIGRLIIGQNGILSTPAVSCIIRKIKAAGGIILTASHCPGGPGGEFGVKFNVANGGPAPDVVSDKIYQISKTIEEYAICPDLRIDLSRLGRQEFDLENKFKPFRVEIVDPVDIYLNLLRNIFDFNAIKSLLTGPSQLKIRVDAMHGVMGPYVRKVLCDELGAPANSAINCVPLEDFGGQHPDPNLTYATTLLEAMKGGEYGFGAAFDADGDRYMILGQNGFFVSPSDSLAIIAANLSCIPYFRQMGVRGFGRSMPTSTALDRVAKSMKVPVYETPAGWRFFSNLMDSGRCSLCGEESFGTGSDHLREKDGLWAVLVWLSIIAARKQSVEEIVRDHWAKYGRHYYCRFDYEGLEPKATYYIMRDLEALVTDKSFIGQQFAVGSHIYSIAKTDSFEYVDPVDGTVTKKQGLRIIFSDASRLIFRLSSSSGVRATIRLYAESYERDPSGHDQEPQAVLSPLIAIALKISQIHERTGRRGPTVIT.

The tract at residues 1-26 (MEGSPIPVLTVPTAPYEDQRPTGGGG) is disordered. T120 is subject to Phosphothreonine. S122 carries the post-translational modification Phosphoserine.

Belongs to the phosphohexose mutase family. Interacts with DMD/dystrophin; the interaction is direct. Interacts with UTRN/utrophin.

Its subcellular location is the cell junction. It localises to the adherens junction. The protein resides in the cytoplasm. It is found in the cytoskeleton. The protein localises to the cell membrane. Its subcellular location is the sarcolemma. Its function is as follows. Component of adherens-type cell-cell and cell-matrix junctions. Has no phosphoglucomutase activity in vitro. The sequence is that of Phosphoglucomutase-like protein 5 from Mus musculus (Mouse).